We begin with the raw amino-acid sequence, 235 residues long: Ubiquinone biosynthesis O-methyltransferase (235 aa).

Residues R40, G60, D81, and M125 each coordinate S-adenosyl-L-methionine.

It belongs to the methyltransferase superfamily. UbiG/COQ3 family.

The enzyme catalyses a 3-demethylubiquinol + S-adenosyl-L-methionine = a ubiquinol + S-adenosyl-L-homocysteine + H(+). The catalysed reaction is a 3-(all-trans-polyprenyl)benzene-1,2-diol + S-adenosyl-L-methionine = a 2-methoxy-6-(all-trans-polyprenyl)phenol + S-adenosyl-L-homocysteine + H(+). Its pathway is cofactor biosynthesis; ubiquinone biosynthesis. O-methyltransferase that catalyzes the 2 O-methylation steps in the ubiquinone biosynthetic pathway. The polypeptide is Ubiquinone biosynthesis O-methyltransferase (Nitrosomonas europaea (strain ATCC 19718 / CIP 103999 / KCTC 2705 / NBRC 14298)).